The sequence spans 198 residues: NAD(P)H dehydrogenase (quinone) (198 aa).

Positions 4–189 constitute a Flavodoxin-like domain; that stretch reads ILVLYYSMYG…AIARYQGEHV (186 aa). Residues 10 to 15 and 78 to 80 contribute to the FMN site; these read SMYGHI and TRF. Tyr-12 contributes to the NAD(+) binding site. Trp-98 is a binding site for substrate. FMN contacts are provided by residues 113–118 and His-133; that span reads STGTGG.

Belongs to the WrbA family. The cofactor is FMN.

The catalysed reaction is a quinone + NADH + H(+) = a quinol + NAD(+). It carries out the reaction a quinone + NADPH + H(+) = a quinol + NADP(+). The sequence is that of NAD(P)H dehydrogenase (quinone) from Klebsiella pneumoniae (strain 342).